The sequence spans 262 residues: GTP cyclohydrolase 1 type 2 homolog (262 aa).

Positions 65, 102, 222, and 225 each coordinate a divalent metal cation.

It belongs to the GTP cyclohydrolase I type 2/NIF3 family. Homohexamer.

This chain is GTP cyclohydrolase 1 type 2 homolog, found in Streptococcus pyogenes serotype M3 (strain ATCC BAA-595 / MGAS315).